The following is a 147-amino-acid chain: Phosphoribosyl-AMP cyclohydrolase (147 aa).

Position 91 (Asp91) interacts with Mg(2+). Cys92 provides a ligand contact to Zn(2+). Residues Asp93 and Asp95 each coordinate Mg(2+). Residues Cys108 and Cys115 each contribute to the Zn(2+) site.

Belongs to the PRA-CH family. In terms of assembly, homodimer. Requires Mg(2+) as cofactor. Zn(2+) serves as cofactor.

The protein resides in the cytoplasm. The catalysed reaction is 1-(5-phospho-beta-D-ribosyl)-5'-AMP + H2O = 1-(5-phospho-beta-D-ribosyl)-5-[(5-phospho-beta-D-ribosylamino)methylideneamino]imidazole-4-carboxamide. It functions in the pathway amino-acid biosynthesis; L-histidine biosynthesis; L-histidine from 5-phospho-alpha-D-ribose 1-diphosphate: step 3/9. Its function is as follows. Catalyzes the hydrolysis of the adenine ring of phosphoribosyl-AMP. The protein is Phosphoribosyl-AMP cyclohydrolase of Rhodopseudomonas palustris (strain BisB5).